The sequence spans 426 residues: Histone-binding protein RBBP7 (426 aa).

At Ala2 the chain carries N-acetylalanine. Ser3 carries the post-translational modification Phosphoserine. N6-acetyllysine; alternate is present on Lys4. Residue Lys4 forms a Glycyl lysine isopeptide (Lys-Gly) (interchain with G-Cter in SUMO2); alternate linkage. Residue Lys4 forms a Glycyl lysine isopeptide (Lys-Gly) (interchain with G-Cter in ubiquitin); alternate linkage. At Thr10 the chain carries Phosphothreonine. WD repeat units lie at residues 47–122 (QWLP…KINH), 128–173 (RARY…LRLR), 181–217 (GLSWNSNLSGHLLSASDDHTVCLWDINAGPKEGKIVD), 228–269 (VVED…HLVD), 275–312 (VNCLSFNPYSEFILATGSADKTVALWDLRNLKLKLHTF), 318–370 (EIFQ…LFIH), and 377–404 (ISDFSWNPNEPWVICSVSEDNIMQIWQM). Ser95 carries the phosphoserine modification. Lys101 participates in a covalent cross-link: Glycyl lysine isopeptide (Lys-Gly) (interchain with G-Cter in SUMO2). Lys119 carries the post-translational modification N6-acetyllysine. Lys155 participates in a covalent cross-link: Glycyl lysine isopeptide (Lys-Gly) (interchain with G-Cter in SUMO2). Lys159 is modified (N6-acetyllysine; alternate). Lys159 participates in a covalent cross-link: Glycyl lysine isopeptide (Lys-Gly) (interchain with G-Cter in SUMO2); alternate. The residue at position 355 (Ser355) is a Phosphoserine.

This sequence belongs to the WD repeat RBAP46/RBAP48/MSI1 family. In terms of assembly, binds directly to helix 1 of the histone fold of histone H4, a region that is not accessible when H4 is in chromatin. Subunit of the type B histone acetyltransferase (HAT) complex, composed of RBBP7 and HAT1. Subunit of the core histone deacetylase (HDAC) complex, which is composed of HDAC1, HDAC2, RBBP4 and RBBP7. The core HDAC complex associates with SIN3A, ARID4B/SAP180, SAP18, SAP30, SAP130, SUDS3/SAP45 and possibly ARID4A/RBP1 and ING1 to form the SIN3 HDAC complex. Component of the nucleosome remodeling and deacetylase (NuRD) repressor complex, composed of core proteins MTA1, MTA2, MTA3, RBBP4, RBBP7, HDAC1, HDAC2, MBD2, MBD3, and peripherally associated proteins CDK2AP1, CDK2AP2, GATAD2A, GATAD2B, CHD3, CHD4 and CHD5. The exact stoichiometry of the NuRD complex is unknown, and some subunits such as MBD2 and MBD3, GATAD2A and GATAD2B, and CHD3, CHD4 and CHD5 define mutually exclusive NuRD complexes. The NuRD complex may interact with MBD3L1. The NuRD complex may interact with MBD3L2. Subunit of the PRC2/EED-EZH2 complex, which is composed of at least EED, EZH2, RBBP4, RBBP7 and SUZ12. The PRC2/EED-EZH2 complex may also associate with HDAC1. Component of the NURF-1 ISWI chromatin remodeling complex (also called the nucleosome-remodeling factor (NURF) complex) at least composed of SMARCA1, BPTF, RBBP4 and RBBP7. Within the complex interacts with SMARCA1. Component of the BPFT-SMARCA1 complex at least composed of SMARCA1, BPFT, RBBP4 and RBBP7; the complex is catalytically inactive and does not remodel chromatin. Within the complex interacts with SMARCA1. Interacts with BRCA1. Interacts with CDK2AP1. Interacts with CENPA. Interacts with CHD3. Interacts with CHD4. Interacts with CREBBP, and this interaction may be enhanced by the binding of phosphorylated CREB1 to CREBBP. Interacts with HDAC7. Interacts with MTA1. Interacts with PWWP2B. Interacts with RB1 (via viral protein-binding domain). Interacts with SUV39H1.

The protein resides in the nucleus. Core histone-binding subunit that may target chromatin remodeling factors, histone acetyltransferases and histone deacetylases to their histone substrates in a manner that is regulated by nucleosomal DNA. Component of several complexes which regulate chromatin metabolism. These include the type B histone acetyltransferase (HAT) complex, which is required for chromatin assembly following DNA replication; the core histone deacetylase (HDAC) complex, which promotes histone deacetylation and consequent transcriptional repression; the nucleosome remodeling and histone deacetylase complex (the NuRD complex), which promotes transcriptional repression by histone deacetylation and nucleosome remodeling; and the PRC2/EED-EZH2 complex, which promotes repression of homeotic genes during development; and the NURF (nucleosome remodeling factor) complex. The chain is Histone-binding protein RBBP7 (RBBP7) from Pongo abelii (Sumatran orangutan).